Consider the following 216-residue polypeptide: MRTVLLTGFEPFENEPINPSWEAVRALDGERIGDAVVVARQLPCVFGAAIDGMAALLRELKPAIAIAVGQAGGRTEMSVERVAINVDDARIADNAGAQPIDTVIAAKGPAAYFSTLPIKAIVRDMRAAGVPAAVSQTAGTFVCNHVFYGLMHALATPAGEGVRGGFIHIPYLPEQAARHPGEASMSLESMVRGIRQAIATTLATEVDVREQGGQLH.

Active-site residues include Glu-80, Cys-143, and His-168.

The protein belongs to the peptidase C15 family. In terms of assembly, homotetramer.

It is found in the cytoplasm. It catalyses the reaction Release of an N-terminal pyroglutamyl group from a polypeptide, the second amino acid generally not being Pro.. Its function is as follows. Removes 5-oxoproline from various penultimate amino acid residues except L-proline. The chain is Pyrrolidone-carboxylate peptidase from Cupriavidus pinatubonensis (strain JMP 134 / LMG 1197) (Cupriavidus necator (strain JMP 134)).